A 218-amino-acid polypeptide reads, in one-letter code: Small ribosomal subunit protein uS3 (218 aa).

The 69-residue stretch at 38-106 (IREFISKRLS…RVHINILEIK (69 aa)) folds into the KH type-2 domain.

Belongs to the universal ribosomal protein uS3 family. As to quaternary structure, part of the 30S ribosomal subunit. Forms a tight complex with proteins S10 and S14.

In terms of biological role, binds the lower part of the 30S subunit head. Binds mRNA in the 70S ribosome, positioning it for translation. The polypeptide is Small ribosomal subunit protein uS3 (Bacillus velezensis (strain DSM 23117 / BGSC 10A6 / LMG 26770 / FZB42) (Bacillus amyloliquefaciens subsp. plantarum)).